We begin with the raw amino-acid sequence, 91 residues long: MTKKRNNFNDSYVSVNNRTGFKRSKVCPLATSQDEDIDYKNTDLLSRFTSDYGRILPRRLTGVCAKKQRKLRLAIIRARFLALVPYCTKKV.

Belongs to the bacterial ribosomal protein bS18 family. Part of the 30S ribosomal subunit. Forms a tight heterodimer with protein bS6.

Binds as a heterodimer with protein bS6 to the central domain of the 16S rRNA, where it helps stabilize the platform of the 30S subunit. In Wolbachia sp. subsp. Brugia malayi (strain TRS), this protein is Small ribosomal subunit protein bS18.